The sequence spans 396 residues: S-adenosylmethionine synthase (396 aa).

His16 lines the ATP pocket. Asp18 lines the Mg(2+) pocket. Residue Glu44 participates in K(+) binding. L-methionine is bound by residues Glu57 and Gln100. The segment at 100 to 110 (QSVDIAQGVDR) is flexible loop. ATP-binding positions include 165-167 (DAK), Asp240, 246-247 (RK), Ala263, and Lys267. Residue Asp240 coordinates L-methionine. Lys271 contributes to the L-methionine binding site.

Belongs to the AdoMet synthase family. As to quaternary structure, homotetramer; dimer of dimers. Mg(2+) serves as cofactor. The cofactor is K(+).

The protein localises to the cytoplasm. It carries out the reaction L-methionine + ATP + H2O = S-adenosyl-L-methionine + phosphate + diphosphate. It participates in amino-acid biosynthesis; S-adenosyl-L-methionine biosynthesis; S-adenosyl-L-methionine from L-methionine: step 1/1. Catalyzes the formation of S-adenosylmethionine (AdoMet) from methionine and ATP. The overall synthetic reaction is composed of two sequential steps, AdoMet formation and the subsequent tripolyphosphate hydrolysis which occurs prior to release of AdoMet from the enzyme. The protein is S-adenosylmethionine synthase of Pseudomonas syringae pv. syringae (strain B728a).